Reading from the N-terminus, the 142-residue chain is Large ribosomal subunit protein uL13 (142 aa).

It belongs to the universal ribosomal protein uL13 family. In terms of assembly, part of the 50S ribosomal subunit.

This protein is one of the early assembly proteins of the 50S ribosomal subunit, although it is not seen to bind rRNA by itself. It is important during the early stages of 50S assembly. This is Large ribosomal subunit protein uL13 from Salmonella agona (strain SL483).